Reading from the N-terminus, the 93-residue chain is Alpha-elapitoxin-Oh2a (93 aa).

The N-terminal stretch at 1–21 is a signal peptide; the sequence is MKTLLLTLVVVTIVCLDLGYT. Cystine bridges form between Cys-24–Cys-43, Cys-36–Cys-64, Cys-49–Cys-53, Cys-68–Cys-79, and Cys-80–Cys-85.

It belongs to the three-finger toxin family. Long-chain subfamily. Type II alpha-neurotoxin sub-subfamily. Expressed by the venom gland.

It localises to the secreted. Functionally, binds with high affinity to muscular (alpha-1/CHRNA1) and neuronal (alpha-7/CHRNA7) nicotinic acetylcholine receptor (nAChR) and inhibits acetylcholine from binding to the receptor, thereby impairing neuromuscular and neuronal transmission. This Ophiophagus hannah (King cobra) protein is Alpha-elapitoxin-Oh2a.